We begin with the raw amino-acid sequence, 1086 residues long: Tyrosine-protein kinase receptor svh-2 (1086 aa).

Residues 1–34 form the signal peptide; that stretch reads MVLGSSQSSAKELTTQSSIFRFLVLLLCFTSATG. Over 35–651 the chain is Extracellular; it reads GQINGKLLNG…DKKGSSPGWK (617 aa). 5 N-linked (GlcNAc...) asparagine glycosylation sites follow: asparagine 276, asparagine 299, asparagine 461, asparagine 554, and asparagine 617. Residues 652-672 form a helical membrane-spanning segment; the sequence is IAIAIISVMTIILIVAIIVYY. Residues 673–1086 lie on the Cytoplasmic side of the membrane; the sequence is MRNRFPRIKT…LLSECSETSV (414 aa). A Protein kinase domain is found at 735 to 996; that stretch reads VDKLDPIGQG…SDLVTIIPNV (262 aa). Residues 741–749 and lysine 767 contribute to the ATP site; that span reads IGQGHYGVV. Aspartate 858 acts as the Proton acceptor in catalysis. The residue at position 890 (tyrosine 890) is a Phosphotyrosine. A disordered region spans residues 1056-1086; that stretch reads AELPSDSPSTSTAIPQSTPYQLLSECSETSV. Residues 1061 to 1086 show a composition bias toward polar residues; the sequence is DSPSTSTAIPQSTPYQLLSECSETSV.

It belongs to the protein kinase superfamily. Tyr protein kinase family. As to quaternary structure, interacts (via cytoplasmic domain) with mlk-1. Interacts with shc-1 (via SH2 domain). May interact (when tyrosine-phosphorylated) with tns-1 (via SH2 domain). In terms of processing, may be autophosphorylated on Tyr-890 following dimerization. Expressed in body wall and vulva muscles, pharynx, intestine, excretory canals, distal tip cells and some neurons. Expressed in D-type motor neurons upon axon injury.

The protein localises to the cell membrane. It catalyses the reaction L-tyrosyl-[protein] + ATP = O-phospho-L-tyrosyl-[protein] + ADP + H(+). In terms of biological role, receptor tyrosine kinase which may phosphorylate mlk-1, a component of the mlk-1, mek-1 and kgb-1 pathway. Involved in axon regeneration after injury by promoting the generation of productive and stable growth cones. The chain is Tyrosine-protein kinase receptor svh-2 from Caenorhabditis elegans.